Here is a 214-residue protein sequence, read N- to C-terminus: Probable transaldolase (214 aa).

K83 serves as the catalytic Schiff-base intermediate with substrate.

This sequence belongs to the transaldolase family. Type 3B subfamily.

The protein resides in the cytoplasm. The enzyme catalyses D-sedoheptulose 7-phosphate + D-glyceraldehyde 3-phosphate = D-erythrose 4-phosphate + beta-D-fructose 6-phosphate. The protein operates within carbohydrate degradation; pentose phosphate pathway; D-glyceraldehyde 3-phosphate and beta-D-fructose 6-phosphate from D-ribose 5-phosphate and D-xylulose 5-phosphate (non-oxidative stage): step 2/3. In terms of biological role, transaldolase is important for the balance of metabolites in the pentose-phosphate pathway. In Geobacter sp. (strain M21), this protein is Probable transaldolase.